The sequence spans 367 residues: Aspartate-semialdehyde dehydrogenase (367 aa).

NADP(+) is bound by residues 10–13 (RGMV), 37–38 (TS), and Gln-73. Arg-102 provides a ligand contact to phosphate. Residue Cys-135 is the Acyl-thioester intermediate of the active site. Cys-135 carries the post-translational modification S-cysteinyl cysteine; in inhibited form. Gln-162 is a binding site for substrate. NADP(+)-binding positions include 165 to 169 (SGGGA), Arg-173, and Pro-193. Residue Glu-241 coordinates substrate. Phosphate is bound at residue Lys-244. A substrate-binding site is contributed by Arg-267. Catalysis depends on His-274, which acts as the Proton acceptor. Gln-350 serves as a coordination point for NADP(+).

The protein belongs to the aspartate-semialdehyde dehydrogenase family. Homodimer.

The enzyme catalyses L-aspartate 4-semialdehyde + phosphate + NADP(+) = 4-phospho-L-aspartate + NADPH + H(+). Its pathway is amino-acid biosynthesis; L-lysine biosynthesis via DAP pathway; (S)-tetrahydrodipicolinate from L-aspartate: step 2/4. The protein operates within amino-acid biosynthesis; L-methionine biosynthesis via de novo pathway; L-homoserine from L-aspartate: step 2/3. It participates in amino-acid biosynthesis; L-threonine biosynthesis; L-threonine from L-aspartate: step 2/5. With respect to regulation, is inhibited by L- and D-cystine, and by other cystine derivatives, via the formation of a covalently bound cysteine at the active site Cys-135. Its function is as follows. Catalyzes the NADPH-dependent formation of L-aspartate-semialdehyde (L-ASA) by the reductive dephosphorylation of L-aspartyl-4-phosphate. The polypeptide is Aspartate-semialdehyde dehydrogenase (Escherichia coli (strain K12)).